The chain runs to 330 residues: Tyrosine-protein phosphatase yvh1 (330 aa).

In terms of domain architecture, Tyrosine-protein phosphatase spans 45–187; that stretch reads NDLSEISKNL…LRVYFECNYQ (143 aa). Cys-131 (phosphocysteine intermediate) is an active-site residue.

It belongs to the protein-tyrosine phosphatase family. Non-receptor class dual specificity subfamily.

It localises to the cytoplasm. Its subcellular location is the nucleus. It carries out the reaction O-phospho-L-tyrosyl-[protein] + H2O = L-tyrosyl-[protein] + phosphate. Functionally, may be directly involved in signal transduction and/or cell cycle regulation. It is necessary for maintaining growth rate or spore germination. Could show both activity toward tyrosine-protein phosphate as well as with serine-protein phosphate. This chain is Tyrosine-protein phosphatase yvh1 (yvh1), found in Schizosaccharomyces pombe (strain 972 / ATCC 24843) (Fission yeast).